The primary structure comprises 482 residues: G patch domain-containing protein 2-like (482 aa).

Residues serine 31, serine 86, and serine 88 each carry the phosphoserine modification. Threonine 91 bears the Phosphothreonine mark. Disordered regions lie at residues 195–222 (SQPG…SECD) and 408–482 (KRKR…TNGC). Positions 198–215 (GRKERMECEAEEQKHGSD) are enriched in basic and acidic residues. Residues 414-427 (VASASFSSPSPVHP) show a composition bias toward low complexity. Polar residues predominate over residues 468–482 (EKNSGCSSSPGTNGC).

The protein is G patch domain-containing protein 2-like (Gpatch2l) of Mus musculus (Mouse).